The primary structure comprises 927 residues: Protein LONGIFOLIA 1 (927 aa).

4 disordered regions span residues 41–198 (TGDE…EGRR), 210–257 (YDER…GHRR), 460–588 (AQKV…SDSN), and 605–626 (YERN…DLGM). A compositionally biased stretch (low complexity) spans 86–114 (SSESSSRLSFSSSPCSSSFSSADISTTAS). A compositionally biased stretch (polar residues) spans 115–125 (QFEQPGLSNGE). Basic and acidic residues predominate over residues 146–165 (DIRELVRSSIHKETRTRDEE). The span at 182–193 (KESSPSRNSNEW) shows a compositional bias: polar residues. Positions 210-226 (YDERETRKTGAKLKETP) are enriched in basic and acidic residues. Low complexity predominate over residues 232–245 (SRSNSFRSARSSCS). Composition is skewed to polar residues over residues 483–500 (QTES…QSKS) and 538–553 (NKNQ…TESA). Composition is skewed to basic and acidic residues over residues 569-584 (SEDR…RSLR) and 605-616 (YERNSDITEQHT).

In terms of assembly, interacts (via C-terminus) with TON1A and TON1B. Expressed in roots, petioles, leaf blades and floral organs.

The protein localises to the nucleus. Functionally, in association with LNG2, regulates leaf morphology by promoting longitudinal polar cell elongation independently of ROT3. The sequence is that of Protein LONGIFOLIA 1 (LNG1) from Arabidopsis thaliana (Mouse-ear cress).